A 596-amino-acid polypeptide reads, in one-letter code: Protein Malvolio (596 aa).

Residues 1 to 34 (MSSNEAYHEPGAGGDGPGGSSGASGGGSQRSNQL) are disordered. The span at 11–28 (GAGGDGPGGSSGASGGGS) shows a compositional bias: gly residues. N-linked (GlcNAc...) asparagine glycosylation is present at N41. The next 7 helical transmembrane spans lie at 77–97 (LWAFTGPGFLMSIAYLDPGNI), 105–125 (AAAKYKILWVLLWATVLGLLM), 154–174 (WILWIMIEIAIIGSDMQEVIG), 186–206 (VVPLWGGVLITIVDTFTFLFL), 216–236 (FLFGTLITIMAVSFGYEYIVS), 263–283 (AVGVVGAVIMPHNLYLHSALV), and 309–329 (VALFVSFIINLFVVAVFAHGM). N-linked (GlcNAc...) asparagine glycosylation occurs at N359. A run of 5 helical transmembrane segments spans residues 373–393 (LFLGCTFGAVAMYIWGVGILA), 424–444 (VLVTRCIAIIPTFCLAMFSKM), 463–483 (PFAAIPTIAFTSCAAIMGEFV), 490–510 (IVSILLTIVVIGVNLYFVVVQ), and 520–540 (LLALVCIFAILYILFNLYLVI). N-linked (GlcNAc...) asparagine glycosylation is present at N574.

This sequence belongs to the NRAMP family. Expressed in macrophages and in the nervous system.

Its subcellular location is the membrane. Functionally, putative transporter required for normal taste behavior. May be a nitrite/nitrate transporter. The protein is Protein Malvolio (Mvl) of Drosophila melanogaster (Fruit fly).